The chain runs to 680 residues: Enzymatic polyprotein (680 aa).

Positions 41 to 131 are protease; sequence LHCFVDTGAS…LYEPFIQFTD (91 aa). The active site involves D46. Residues 273-453 form the Reverse transcriptase domain; the sequence is LKVIKPSKSP…KKINFLGLEI (181 aa).

It belongs to the caulimoviridae enzymatic polyprotein family.

It carries out the reaction DNA(n) + a 2'-deoxyribonucleoside 5'-triphosphate = DNA(n+1) + diphosphate. Its function is as follows. Encodes for at least two polypeptides: protease (PR) and reverse transcriptase (RT). The protease processes the polyprotein in cis. Reverse transcriptase is multifunctional enzyme that converts the viral RNA genome into dsDNA in viral cytoplasmic capsids. This enzyme displays a DNA polymerase activity that can copy either DNA or RNA templates, and a ribonuclease H (RNase H) activity that cleaves the RNA strand of RNA-DNA heteroduplexes in a partially processive 3'- to 5'-endonucleasic mode. Neo-synthesized pregenomic RNA (pgRNA) are encapsidated, and reverse-transcribed inside the nucleocapsid. Partial (+)DNA is synthesized from the (-)DNA template and generates the relaxed circular DNA (RC-DNA) genome. After budding and infection, the RC-DNA migrates in the nucleus, and is converted into a plasmid-like covalently closed circular DNA (cccDNA). The protein is Enzymatic polyprotein of Cauliflower mosaic virus (strain NY8153) (CaMV).